Consider the following 758-residue polypeptide: Inhibitor of nuclear factor kappa-B kinase subunit alpha (758 aa).

The Protein kinase domain maps to 15 to 301 (WVMKERLGTG…LNTDSKQPQC (287 aa)). ATP contacts are provided by residues 21 to 29 (LGTGGFGHV) and Lys44. Asp145 acts as the Proton acceptor in catalysis. The interval 456-477 (LLRFNTNLTRYKNMMFSFSQQL) is leucine-zipper. The tract at residues 741–746 (QDWSWT) is NEMO-binding.

The protein belongs to the protein kinase superfamily. Ser/Thr protein kinase family. I-kappa-B kinase subfamily. As to quaternary structure, directly interacts with ikbkg/nemo.

The protein localises to the cytoplasm. It is found in the nucleus. It carries out the reaction L-seryl-[I-kappa-B protein] + ATP = O-phospho-L-seryl-[I-kappa-B protein] + ADP + H(+). Activated when phosphorylated and inactivated when dephosphorylated. Its function is as follows. Phosphorylates inhibitors of NF-kappa-B thus leading to the dissociation of the inhibitor/NF-kappa-B complex and ultimately the degradation of the inhibitor. Phosphorylates 'Ser-10' of histone H3 at NF-kappa-B-regulated promoters during inflammatory responses triggered by cytokines. The chain is Inhibitor of nuclear factor kappa-B kinase subunit alpha (chuk) from Danio rerio (Zebrafish).